A 230-amino-acid polypeptide reads, in one-letter code: MITIALPSKGRMKEDASAVLERAGLKVASVGNDRSYRGRIEGRDDIEVAYLSASEIAREIGAGTVDFGVTGEDLVREGLTNADAQVEFCARLGFGHADVVVAVPEIWLDVDSMADLGDVASEFRARHGRRLAIATKYWRLTQQFFSRQHGIQLYRIVESLGATEGAPAAGQADIIVDITSTGSTLKANHLKILSDGIIVRSEACFVRARKPEHEGDAAIQEIASRIKAAV.

The protein belongs to the ATP phosphoribosyltransferase family. Short subfamily. Heteromultimer composed of HisG and HisZ subunits.

It is found in the cytoplasm. The catalysed reaction is 1-(5-phospho-beta-D-ribosyl)-ATP + diphosphate = 5-phospho-alpha-D-ribose 1-diphosphate + ATP. It functions in the pathway amino-acid biosynthesis; L-histidine biosynthesis; L-histidine from 5-phospho-alpha-D-ribose 1-diphosphate: step 1/9. Its function is as follows. Catalyzes the condensation of ATP and 5-phosphoribose 1-diphosphate to form N'-(5'-phosphoribosyl)-ATP (PR-ATP). Has a crucial role in the pathway because the rate of histidine biosynthesis seems to be controlled primarily by regulation of HisG enzymatic activity. This chain is ATP phosphoribosyltransferase, found in Agrobacterium fabrum (strain C58 / ATCC 33970) (Agrobacterium tumefaciens (strain C58)).